A 104-amino-acid polypeptide reads, in one-letter code: Thioredoxin (104 aa).

The Thioredoxin domain occupies 2–104 (AIVKVTDADF…NLAEVLDKHL (103 aa)). Cys29 and Cys32 are disulfide-bonded.

This sequence belongs to the thioredoxin family.

In terms of biological role, component of the thioredoxin-thioredoxin reductase system. Participates in various redox reactions through the reversible oxidation of its active center dithiol to a disulfide and catalyzes dithiol-disulfide exchange reactions. This is Thioredoxin (trxA) from Staphylococcus aureus (strain N315).